Reading from the N-terminus, the 593-residue chain is UvrABC system protein C (593 aa).

The GIY-YIG domain occupies 17-94; that stretch reads MEPGCYLMKD…IKQYQPRYNI (78 aa). The UVR domain occupies 199–234; sequence KTILKSLEERMLTASESLDFERAKEYRDLIQHIQNL.

The protein belongs to the UvrC family. Interacts with UvrB in an incision complex.

It localises to the cytoplasm. Its function is as follows. The UvrABC repair system catalyzes the recognition and processing of DNA lesions. UvrC both incises the 5' and 3' sides of the lesion. The N-terminal half is responsible for the 3' incision and the C-terminal half is responsible for the 5' incision. The polypeptide is UvrABC system protein C (Staphylococcus aureus (strain bovine RF122 / ET3-1)).